Here is a 146-residue protein sequence, read N- to C-terminus: Hemoglobin subunit beta (146 aa).

At V1 the chain carries N-acetylvaline. Residues 2–146 (HLTDAEKALV…VATALAHKYH (145 aa)) form the Globin domain. T12 carries the post-translational modification Phosphothreonine. S44 carries the post-translational modification Phosphoserine. At K59 the chain carries N6-acetyllysine. H63 provides a ligand contact to heme b. K82 carries the post-translational modification N6-acetyllysine. H92 is a binding site for heme b. Residue C93 is modified to S-nitrosocysteine. At K144 the chain carries N6-acetyllysine.

This sequence belongs to the globin family. In terms of assembly, heterotetramer of two alpha chains and two beta chains. Red blood cells.

Functionally, involved in oxygen transport from the lung to the various peripheral tissues. The chain is Hemoglobin subunit beta from Peromyscus californicus (California mouse).